A 276-amino-acid chain; its full sequence is Digeranylgeranylglyceryl phosphate synthase (276 aa).

5 helical membrane passes run 14-34 (VNTL…GGAV), 90-110 (VVLF…AVCI), 144-164 (FVFG…AALA), 200-220 (ALAV…VPYL), and 221-241 (VGVF…VMVV).

The protein belongs to the UbiA prenyltransferase family. DGGGP synthase subfamily. It depends on Mg(2+) as a cofactor.

It is found in the cell membrane. It catalyses the reaction sn-3-O-(geranylgeranyl)glycerol 1-phosphate + (2E,6E,10E)-geranylgeranyl diphosphate = 2,3-bis-O-(geranylgeranyl)-sn-glycerol 1-phosphate + diphosphate. It functions in the pathway membrane lipid metabolism; glycerophospholipid metabolism. Prenyltransferase that catalyzes the transfer of the geranylgeranyl moiety of geranylgeranyl diphosphate (GGPP) to the C2 hydroxyl of (S)-3-O-geranylgeranylglyceryl phosphate (GGGP). This reaction is the second ether-bond-formation step in the biosynthesis of archaeal membrane lipids. The sequence is that of Digeranylgeranylglyceryl phosphate synthase from Halobacterium salinarum (strain ATCC 29341 / DSM 671 / R1).